We begin with the raw amino-acid sequence, 233 residues long: Ribonuclease HII (233 aa).

Residues 21–211 enclose the RNase H type-2 domain; the sequence is KIIAGVDEVG…LDALPQWRHL (191 aa). 3 residues coordinate a divalent metal cation: Asp-27, Glu-28, and Asp-119.

The protein belongs to the RNase HII family. It depends on Mn(2+) as a cofactor. Mg(2+) is required as a cofactor.

The protein resides in the cytoplasm. It carries out the reaction Endonucleolytic cleavage to 5'-phosphomonoester.. In terms of biological role, endonuclease that specifically degrades the RNA of RNA-DNA hybrids. The protein is Ribonuclease HII (rnhB) of Streptomyces coelicolor (strain ATCC BAA-471 / A3(2) / M145).